Consider the following 85-residue polypeptide: YcgL domain-containing protein ECA2367 (85 aa).

The YcgL domain occupies 1-85 (MFCVIYRSVK…PVESLLTTPV (85 aa)).

This Pectobacterium atrosepticum (strain SCRI 1043 / ATCC BAA-672) (Erwinia carotovora subsp. atroseptica) protein is YcgL domain-containing protein ECA2367.